A 703-amino-acid chain; its full sequence is Pinin (703 aa).

Ala-2 carries the N-acetylalanine modification. Positions 2 to 32 (AVAVRTLQEQLEKAKESLKNVDENIRKLTGR) form a coiled coil. Positions 46–148 (ALSGPGGGRG…ETPERPGPIF (103 aa)) are disordered. Phosphoserine is present on Ser-48. Omega-N-methylarginine is present on Arg-54. Ser-58, Ser-66, Ser-96, and Ser-100 each carry phosphoserine. A compositionally biased stretch (basic and acidic residues) spans 87 to 100 (GGERRTRRESRQES). Lys-109 participates in a covalent cross-link: Glycyl lysine isopeptide (Lys-Gly) (interchain with G-Cter in SUMO2). Residues Ser-114 and Ser-115 each carry the phosphoserine modification. Lys-121 is covalently cross-linked (Glycyl lysine isopeptide (Lys-Gly) (interchain with G-Cter in SUMO2)). A Phosphothreonine modification is found at Thr-125. Residues Lys-138 and Lys-157 each participate in a glycyl lysine isopeptide (Lys-Gly) (interchain with G-Cter in SUMO2) cross-link. A Glycyl lysine isopeptide (Lys-Gly) (interchain with G-Cter in SUMO1); alternate cross-link involves residue Lys-159. Residue Lys-159 forms a Glycyl lysine isopeptide (Lys-Gly) (interchain with G-Cter in SUMO2); alternate linkage. Residues 165-236 (ATERQKRRQE…HNAKIIKYIR (72 aa)) are a coiled coil. The tract at residues 223–285 (EWNEHNAKII…AEQINKMEAR (63 aa)) is sufficient for PSAP complex assembly. Lys-230 participates in a covalent cross-link: Glycyl lysine isopeptide (Lys-Gly) (interchain with G-Cter in SUMO2). At Lys-240 the chain carries N6-acetyllysine; alternate. The residue at position 240 (Lys-240) is an N6-succinyllysine; alternate. Residues Lys-281, Lys-306, and Lys-313 each participate in a glycyl lysine isopeptide (Lys-Gly) (interchain with G-Cter in SUMO2) cross-link. Disordered regions lie at residues 284–314 (ARPR…EGKV), 331–394 (RVGT…EEVM), and 408–703 (AEQE…PGQL). Basic and acidic residues-rich tracts occupy residues 348–357 (EIPIVHSDAE) and 366–386 (KQEM…EKQQ). A Phosphoserine modification is found at Ser-354. Positions 354–411 (SDAEKEQEEEEQKQEMEVKMEEETEVRESEKQQDSQPEEVMDVLEMVESVKNVIAEQE) form a coiled coil. Residues Lys-366 and Lys-372 each participate in a glycyl lysine isopeptide (Lys-Gly) (interchain with G-Cter in SUMO2) cross-link. Phosphoserine is present on residues Ser-382 and Ser-388. Residues 417-433 (QVERVEPSENEASKELE) show a composition bias toward basic and acidic residues. Residues Ser-450 and Ser-457 each carry the phosphoserine modification. Positions 479 to 489 (PMAQPQAQSLP) are enriched in low complexity. Glycyl lysine isopeptide (Lys-Gly) (interchain with G-Cter in SUMO2) cross-links involve residues Lys-541 and Lys-549. Ser-565 carries the phosphoserine modification. Lys-566 participates in a covalent cross-link: Glycyl lysine isopeptide (Lys-Gly) (interchain with G-Cter in SUMO2). Residues 572–588 (RSRSRGRARNRTSKSRS) are compositionally biased toward basic residues. Over residues 589–642 (RSSSSSSSSSSSTSSSSGSSSSSGSSSSRTSSSSSSTSGSSSRDSSSSTTSSSE) the composition is skewed to low complexity. Over residues 646 to 664 (RSRGRGHNRDRKHRRSVDR) the composition is skewed to basic residues. Over residues 665-676 (KRRDASGLERSH) the composition is skewed to basic and acidic residues. Residues Ser-670 and Ser-691 each carry the phosphoserine modification.

This sequence belongs to the pinin family. As to quaternary structure, found in a mRNA splicing-dependent exon junction complex (EJC). Found in a complex with SR proteins. Found in a mRNP complex with RNPS1. Component of the PSAP complex consisting of RNPS1, SAP18 and PNN. Interacts with PNISR, CTBP1, CTBP2, KRT8, KRT18, KRT19, PS1D/PNO40, PPIG, RNPS1, SFRS4 and SRRM2. Identified in the spliceosome C complex.

The protein localises to the nucleus speckle. It is found in the cell junction. The protein resides in the desmosome. Functionally, transcriptional activator binding to the E-box 1 core sequence of the E-cadherin promoter gene; the core-binding sequence is 5'CAGGTG-3'. Capable of reversing CTBP1-mediated transcription repression. Auxiliary component of the splicing-dependent multiprotein exon junction complex (EJC) deposited at splice junction on mRNAs. The EJC is a dynamic structure consisting of core proteins and several peripheral nuclear and cytoplasmic associated factors that join the complex only transiently either during EJC assembly or during subsequent mRNA metabolism. Participates in the regulation of alternative pre-mRNA splicing. Associates to spliced mRNA within 60 nt upstream of the 5'-splice sites. Component of the PSAP complex which binds RNA in a sequence-independent manner and is proposed to be recruited to the EJC prior to or during the splicing process and to regulate specific excision of introns in specific transcription subsets. Involved in the establishment and maintenance of epithelia cell-cell adhesion. The chain is Pinin (PNN) from Bos taurus (Bovine).